Reading from the N-terminus, the 142-residue chain is Large ribosomal subunit protein uL22 (142 aa).

The segment at 122–142 (RAEAPEETKPSRGTNKEQKAA) is disordered.

The protein belongs to the universal ribosomal protein uL22 family. In terms of assembly, part of the 50S ribosomal subunit.

This protein binds specifically to 23S rRNA; its binding is stimulated by other ribosomal proteins, e.g. L4, L17, and L20. It is important during the early stages of 50S assembly. It makes multiple contacts with different domains of the 23S rRNA in the assembled 50S subunit and ribosome. In terms of biological role, the globular domain of the protein is located near the polypeptide exit tunnel on the outside of the subunit, while an extended beta-hairpin is found that lines the wall of the exit tunnel in the center of the 70S ribosome. This is Large ribosomal subunit protein uL22 from Gluconobacter oxydans (strain 621H) (Gluconobacter suboxydans).